Consider the following 427-residue polypeptide: Trigger factor (427 aa).

The region spanning 163 to 248 (GDTVVIDFVG…IHEVKAKEVP (86 aa)) is the PPIase FKBP-type domain.

It belongs to the FKBP-type PPIase family. Tig subfamily.

It localises to the cytoplasm. It carries out the reaction [protein]-peptidylproline (omega=180) = [protein]-peptidylproline (omega=0). Functionally, involved in protein export. Acts as a chaperone by maintaining the newly synthesized protein in an open conformation. Functions as a peptidyl-prolyl cis-trans isomerase. This is Trigger factor from Streptococcus pneumoniae (strain Taiwan19F-14).